The primary structure comprises 357 residues: DNA replication and repair protein RecF (357 aa).

31-38 is an ATP binding site; it reads GQNGAGKT.

Belongs to the RecF family.

It localises to the cytoplasm. Functionally, the RecF protein is involved in DNA metabolism; it is required for DNA replication and normal SOS inducibility. RecF binds preferentially to single-stranded, linear DNA. It also seems to bind ATP. The sequence is that of DNA replication and repair protein RecF from Coxiella burnetii (strain CbuG_Q212) (Coxiella burnetii (strain Q212)).